The chain runs to 224 residues: Golgi to ER traffic protein 1 (224 aa).

The Lumenal segment spans residues 1–33 (MDEAIIVDAEFVAPVGTTAGEFVPIDRAPAAGL). The helical transmembrane segment at 34-53 (LLLVAFVVLYAKVISKLGKP) threads the bilayer. Over 54 to 137 (AIQEFLWEII…RFFTIISSAI (84 aa)) the chain is Cytoplasmic. Residues 102–124 (AKLDREYGKLKVEIEDINNLLTA) are a coiled coil. The helical transmembrane segment at 138-158 (FLSTTGMKMFLRIKHRKAAIF) threads the bilayer. At 159–182 (WLPKNAFPYPIEYILSFSSAPLGS) the chain is on the lumenal side. The helical transmembrane segment at 183–199 (VSVSAWLMICDAAMDLI) threads the bilayer. Residues 200 to 224 (VTIFVALVVGVIGMLRSNKVKPKTA) are Cytoplasmic-facing.

It belongs to the WRB/GET1 family. In terms of assembly, component of the Golgi to ER traffic (GET) complex, which is composed of GET1, GET2 and GET3. Within the complex, GET1 and GET2 form a heterotetramer which is stabilized by phosphatidylinositol binding and which binds to the GET3 homodimer.

It localises to the endoplasmic reticulum membrane. Its subcellular location is the golgi apparatus membrane. Its function is as follows. Required for the post-translational delivery of tail-anchored (TA) proteins to the endoplasmic reticulum. Together with GET2, acts as a membrane receptor for soluble GET3, which recognizes and selectively binds the transmembrane domain of TA proteins in the cytosol. The GET complex cooperates with the HDEL receptor ERD2 to mediate the ATP-dependent retrieval of resident ER proteins that contain a C-terminal H-D-E-L retention signal from the Golgi to the ER. This Yarrowia lipolytica (strain CLIB 122 / E 150) (Yeast) protein is Golgi to ER traffic protein 1.